An 81-amino-acid polypeptide reads, in one-letter code: Putative membrane protein insertion efficiency factor (81 aa).

A disordered region spans residues 59 to 81 (PWNPGGYDPVPPIKTSRSSSMAE).

It belongs to the UPF0161 family.

Its subcellular location is the cell inner membrane. Functionally, could be involved in insertion of integral membrane proteins into the membrane. The chain is Putative membrane protein insertion efficiency factor from Azotobacter vinelandii (strain DJ / ATCC BAA-1303).